We begin with the raw amino-acid sequence, 207 residues long: GTP cyclohydrolase 1 (207 aa).

Zn(2+)-binding residues include Cys88, His91, and Cys162.

The protein belongs to the GTP cyclohydrolase I family. As to quaternary structure, toroid-shaped homodecamer, composed of two pentamers of five dimers.

The enzyme catalyses GTP + H2O = 7,8-dihydroneopterin 3'-triphosphate + formate + H(+). It participates in cofactor biosynthesis; 7,8-dihydroneopterin triphosphate biosynthesis; 7,8-dihydroneopterin triphosphate from GTP: step 1/1. In Sulfurisphaera tokodaii (strain DSM 16993 / JCM 10545 / NBRC 100140 / 7) (Sulfolobus tokodaii), this protein is GTP cyclohydrolase 1.